Reading from the N-terminus, the 148-residue chain is uncharacterized protein (148 aa).

Positions Gln-38–Lys-99 are disordered. The segment covering Phe-64–Arg-82 has biased composition (basic and acidic residues). Over residues Arg-83 to Lys-99 the composition is skewed to basic residues.

This is an uncharacterized protein from Fowl adenovirus A serotype 1 (strain CELO / Phelps) (FAdV-1).